A 359-amino-acid polypeptide reads, in one-letter code: Fructose-bisphosphate aldolase (359 aa).

D-glyceraldehyde 3-phosphate is bound at residue serine 50. Aspartate 83 (proton donor) is an active-site residue. Residues histidine 84, aspartate 105, glutamate 142, and histidine 198 each coordinate Zn(2+). Residue glycine 199 participates in dihydroxyacetone phosphate binding. Histidine 232 lines the Zn(2+) pocket. Dihydroxyacetone phosphate is bound by residues 233–235 and 275–278; these read GSS and NIDT.

The cofactor is Zn(2+).

It carries out the reaction beta-D-fructose 1,6-bisphosphate = D-glyceraldehyde 3-phosphate + dihydroxyacetone phosphate. Its pathway is carbohydrate degradation; glycolysis; D-glyceraldehyde 3-phosphate and glycerone phosphate from D-glucose: step 4/4. Its function is as follows. Catalyzes the aldol condensation of dihydroxyacetone phosphate (DHAP or glycerone-phosphate) with glyceraldehyde 3-phosphate (G3P) to form fructose 1,6-bisphosphate (FBP) in gluconeogenesis and the reverse reaction in glycolysis. The protein is Fructose-bisphosphate aldolase of Nostoc sp. (strain PCC 7120 / SAG 25.82 / UTEX 2576).